Consider the following 474-residue polypeptide: Amidophosphoribosyltransferase (474 aa).

Residues 1–10 (MLGESEVRDK) constitute a propeptide that is removed on maturation. C11 acts as the Nucleophile in catalysis. In terms of domain architecture, Glutamine amidotransferase type-2 spans 11–234 (CGIVGIYSQD…PGEILHLNRG (224 aa)). C250 is a binding site for [4Fe-4S] cluster. Residues S297, D359, and D360 each contribute to the Mg(2+) site. [4Fe-4S] cluster contacts are provided by C396, C447, and C450.

In the C-terminal section; belongs to the purine/pyrimidine phosphoribosyltransferase family. It depends on Mg(2+) as a cofactor. [4Fe-4S] cluster serves as cofactor.

The catalysed reaction is 5-phospho-beta-D-ribosylamine + L-glutamate + diphosphate = 5-phospho-alpha-D-ribose 1-diphosphate + L-glutamine + H2O. It participates in purine metabolism; IMP biosynthesis via de novo pathway; N(1)-(5-phospho-D-ribosyl)glycinamide from 5-phospho-alpha-D-ribose 1-diphosphate: step 1/2. Functionally, catalyzes the formation of phosphoribosylamine from phosphoribosylpyrophosphate (PRPP) and glutamine. This is Amidophosphoribosyltransferase from Methanothermobacter thermautotrophicus (strain ATCC 29096 / DSM 1053 / JCM 10044 / NBRC 100330 / Delta H) (Methanobacterium thermoautotrophicum).